A 501-amino-acid polypeptide reads, in one-letter code: Solute carrier family 2, facilitated glucose transporter member 5 (501 aa).

Met1 bears the N-acetylmethionine mark. The Cytoplasmic segment spans residues 1 to 18; the sequence is MEPQDPVKREGRLTPVIV. Residues 19-39 traverse the membrane as a helical segment; that stretch reads LATLIAAFGSSFQYGYNVAAI. Tyr32 serves as a coordination point for D-fructose. Topologically, residues 40–68 are extracellular; sequence NSPSEFMKDFYNYTYYDRVGEYMNEFYLT. The N-linked (GlcNAc...) asparagine glycan is linked to Asn51. The helical transmembrane segment at 69–91 threads the bilayer; sequence LLWSVTVSMFPFGGFLGSLMVGP. Topologically, residues 92–98 are cytoplasmic; the sequence is LVNNLGR. The helical transmembrane segment at 99-119 threads the bilayer; sequence KGTLLFNNIFSIVPALLMGFS. At 120 to 126 the chain is on the extracellular side; sequence ELAKSFE. Residues 127 to 149 form a helical membrane-spanning segment; the sequence is MIIVARVLVGICAGLSSNVVPMY. Over 150–161 the chain is Cytoplasmic; sequence LGELAPKNWRGA. The chain crosses the membrane as a helical span at residues 162-182; the sequence is LGVVPQLFITIGILVAQIFGL. Residue Gln167 coordinates D-fructose. The Extracellular segment spans residues 183-192; sequence RSLLANEEGW. The helical transmembrane segment at 193–213 threads the bilayer; the sequence is PILLGLTGIPAVLQLLFLPFF. Residues 214–277 lie on the Cytoplasmic side of the membrane; sequence PESPRYLLIQ…LFKMRSLRWQ (64 aa). A helical transmembrane segment spans residues 278–298; it reads VISIIVLMAGQQLSGVNAIYY. D-fructose contacts are provided by residues Gln288 and 296-298; that span reads IYY. Topologically, residues 299–313 are extracellular; it reads YADQIYLSAGVNEDD. The helical transmembrane segment at 314–334 threads the bilayer; it reads VQYVTAGTGAVNVLITVCAIF. Residues 335-342 lie on the Cytoplasmic side of the membrane; sequence VVELMGRR. A helical transmembrane segment spans residues 343–363; that stretch reads FLLLLGFSVCFTACCVLTGAL. Over 364-371 the chain is Extracellular; sequence ALQDVISW. Residues 372-394 form a helical membrane-spanning segment; that stretch reads MPYVSIACVISYVIGHALGPSPI. D-fructose is bound at residue His387. Residues 395-412 are Cytoplasmic-facing; the sequence is PALLVTEIFLQSSRPAAY. A helical transmembrane segment spans residues 413–433; that stretch reads MVAGTVHWLSNFTVGLVFPFI. A D-fructose-binding site is contributed by 419–420; it reads HW. Over 434–439 the chain is Extracellular; sequence QVGLGA. The helical transmembrane segment at 440 to 460 threads the bilayer; that stretch reads YSFVIFAVICLLTTVYIFLII. The Cytoplasmic segment spans residues 461 to 501; sequence PETKSKTFIEINRIFIKMNKVPGVHPEKEELKEFPPSTARQ.

This sequence belongs to the major facilitator superfamily. Sugar transporter (TC 2.A.1.1) family. Glucose transporter subfamily.

The protein resides in the apical cell membrane. The protein localises to the cell membrane. Its subcellular location is the sarcolemma. The catalysed reaction is D-fructose(out) = D-fructose(in). Functions as a fructose transporter that has only low activity with other monosaccharides. Can mediate the uptake of deoxyglucose, but with low efficiency. Essential for fructose uptake in the small intestine. Plays a role in the regulation of salt uptake and blood pressure in response to dietary fructose. Required for the development of high blood pressure in response to high dietary fructose intake. This is Solute carrier family 2, facilitated glucose transporter member 5 from Bos taurus (Bovine).